The following is a 190-amino-acid chain: Protein GrpE (190 aa).

The segment covering 1–26 (MADKEKDAVIVDETEHVDVDSKESKK) has biased composition (basic and acidic residues). Positions 1 to 31 (MADKEKDAVIVDETEHVDVDSKESKKEKKTK) are disordered.

It belongs to the GrpE family. As to quaternary structure, homodimer.

It localises to the cytoplasm. Functionally, participates actively in the response to hyperosmotic and heat shock by preventing the aggregation of stress-denatured proteins, in association with DnaK and GrpE. It is the nucleotide exchange factor for DnaK and may function as a thermosensor. Unfolded proteins bind initially to DnaJ; upon interaction with the DnaJ-bound protein, DnaK hydrolyzes its bound ATP, resulting in the formation of a stable complex. GrpE releases ADP from DnaK; ATP binding to DnaK triggers the release of the substrate protein, thus completing the reaction cycle. Several rounds of ATP-dependent interactions between DnaJ, DnaK and GrpE are required for fully efficient folding. The chain is Protein GrpE from Acholeplasma laidlawii (strain PG-8A).